The following is a 217-amino-acid chain: Ras-related protein RABA2a (217 aa).

19-26 (GDSGVGKS) provides a ligand contact to GTP. The short motif at 41-49 (SKSTIGVEF) is the Effector region element. Residues 67–71 (DTAGQ), 125–128 (NKTD), and 155–156 (SA) each bind GTP. The S-palmitoyl cysteine moiety is linked to residue cysteine 213. Cysteine 214 is modified (cysteine methyl ester). Cysteine 214 is lipidated: S-geranylgeranyl cysteine. Positions 215 to 217 (SSS) are cleaved as a propeptide — removed in mature form.

It belongs to the small GTPase superfamily. Rab family. Expressed in root tips.

It localises to the endosome membrane. The protein resides in the golgi apparatus. It is found in the trans-Golgi network membrane. Intracellular vesicle trafficking and protein transport. This Arabidopsis thaliana (Mouse-ear cress) protein is Ras-related protein RABA2a (RABA2A).